Here is a 153-residue protein sequence, read N- to C-terminus: Large ribosomal subunit protein uL15 (153 aa).

A compositionally biased stretch (basic residues) spans 1–40 (MTDKKRRQRGSRTHGGGTHKNRRGAGNRGGRGRAGRKKHE). Residues 1-60 (MTDKKRRQRGSRTHGGGTHKNRRGAGNRGGRGRAGRKKHEQHNYEDVGKSGFKRPEKTDR) form a disordered region. Over residues 41 to 60 (QHNYEDVGKSGFKRPEKTDR) the composition is skewed to basic and acidic residues.

Belongs to the universal ribosomal protein uL15 family. Part of the 50S ribosomal subunit.

Its function is as follows. Binds to the 23S rRNA. The polypeptide is Large ribosomal subunit protein uL15 (Halobacterium salinarum (strain ATCC 29341 / DSM 671 / R1)).